The chain runs to 405 residues: Glucose-1-phosphate adenylyltransferase (405 aa).

Alpha-D-glucose 1-phosphate is bound by residues Tyr-96, Gly-161, 176 to 177 (EK), and Ser-194.

The protein belongs to the bacterial/plant glucose-1-phosphate adenylyltransferase family. As to quaternary structure, homotetramer.

It carries out the reaction alpha-D-glucose 1-phosphate + ATP + H(+) = ADP-alpha-D-glucose + diphosphate. It participates in glycan biosynthesis; glycogen biosynthesis. Functionally, involved in the biosynthesis of ADP-glucose, a building block required for the elongation reactions to produce glycogen. Catalyzes the reaction between ATP and alpha-D-glucose 1-phosphate (G1P) to produce pyrophosphate and ADP-Glc. This chain is Glucose-1-phosphate adenylyltransferase, found in Aliivibrio fischeri (strain MJ11) (Vibrio fischeri).